The primary structure comprises 88 residues: Small ribosomal subunit protein bS20 (88 aa).

It belongs to the bacterial ribosomal protein bS20 family.

Its function is as follows. Binds directly to 16S ribosomal RNA. This Legionella pneumophila (strain Paris) protein is Small ribosomal subunit protein bS20.